Consider the following 115-residue polypeptide: MSEDYLKMFTGVVLLIFVIIAGYFFSERNDRKMFLLSSLVFLVVNIACLYVLTASLWFLCGAIMSQGAALVVSIVAAALPDVTSFDRFRRIFICIMLSSVWSGVMWFFIRGLMTG.

Transmembrane regions (helical) follow at residues 5-25 (YLKM…GYFF), 39-59 (LVFL…LWFL), 60-80 (CGAI…AALP), and 91-111 (IFIC…FIRG).

It localises to the cell membrane. This is Protein TrbA (trbA) from Escherichia coli (strain K12).